The sequence spans 981 residues: Rab3 GTPase-activating protein catalytic subunit (981 aa).

Phosphoserine is present on residues Ser83, Ser379, Ser536, Ser579, Ser581, and Ser590. The disordered stretch occupies residues 532–558 (GKKTSLSDSTTSAYPGDAGKTGGQLGL). The disordered stretch occupies residues 591–614 (DTEDLKGNGQESGKKGGPKEMANL). The residue at position 664 (Ser664) is a Phosphoserine.

It belongs to the Rab3-GAP catalytic subunit family. The Rab3 GTPase-activating complex is a heterodimer composed of Rab3gap1 and Rab3gap2. The Rab3 GTPase-activating complex interacts with DMXL2. Interacts with LMAN1. In terms of tissue distribution, in the eye, it is highly expressed within the lens, particularly in the anterior lens epithelium and in a ring corresponding to the equatorial region where anterior cells are differentiating into lens fibers. Also highly expressed in the retina.

It is found in the cytoplasm. The protein localises to the endoplasmic reticulum. It localises to the golgi apparatus. The protein resides in the cis-Golgi network. Its function is as follows. Catalytic subunit of the Rab3 GTPase-activating (Rab3GAP) complex composed of RAB3GAP1 and RAB3GAP2, which has GTPase-activating protein (GAP) activity towards various Rab3 subfamily members (RAB3A, RAB3B, RAB3C and RAB3D), RAB5A and RAB43, and guanine nucleotide exchange factor (GEF) activity towards RAB18. As part of the Rab3GAP complex, acts as a GAP for Rab3 proteins by converting active RAB3-GTP to the inactive form RAB3-GDP. Rab3 proteins are involved in regulated exocytosis of neurotransmitters and hormones. The Rab3GAP complex, acts as a GEF for RAB18 by promoting the conversion of inactive RAB18-GDP to the active form RAB18-GTP. Recruits and stabilizes RAB18 at the cis-Golgi membrane where RAB18 is most likely activated. Also involved in RAB18 recruitment at the endoplasmic reticulum (ER) membrane where it maintains proper ER structure. Required for normal eye and brain development. May participate in neurodevelopmental processes such as proliferation, migration and differentiation before synapse formation, and non-synaptic vesicular release of neurotransmitters. The chain is Rab3 GTPase-activating protein catalytic subunit from Mus musculus (Mouse).